The sequence spans 249 residues: Cilia- and flagella-associated protein 410 (249 aa).

LRR repeat units follow at residues 19-40 (NVRK…REMP), 41-62 (SLEV…RSCR), and 63-84 (RLSE…FYLK). In terms of domain architecture, LRRCT spans 97 to 137 (NPCCGTSPHLYRMTVLRNLPHLQKLDNQAVTEEELTRALME). Residues 146–203 (HREGAGNGCPKPPYALNSVSSATETSQHLLSYTEETEVQGQTTTDQSPSFSPRDTMRS) form a disordered region. Over residues 162-175 (NSVSSATETSQHLL) the composition is skewed to polar residues.

Found in a complex with CFAP410, NEK1 and SPATA7. Interacts with NEK1. As to expression, expressed in the retina.

The protein localises to the cell projection. It localises to the cilium. The protein resides in the cytoplasm. Its subcellular location is the cytoskeleton. It is found in the cilium basal body. The protein localises to the mitochondrion. It localises to the photoreceptor outer segment. Functionally, plays a role in cilia formation and/or maintenance. Plays a role in the regulation of cell morphology and cytoskeletal organization. Involved in DNA damage repair. This is Cilia- and flagella-associated protein 410 from Mus musculus (Mouse).